The chain runs to 650 residues: Chaperone protein HtpG (650 aa).

The a; substrate-binding stretch occupies residues 1–344 (MSKHTHSFQA…SADLPLNVSR (344 aa)). Positions 345–582 (ELLQESRDVR…DGGMSTQLAR (238 aa)) are b. The tract at residues 583–650 (LLKQAGQSAP…YVKRVNALLA (68 aa)) is c.

Belongs to the heat shock protein 90 family. As to quaternary structure, homodimer.

It localises to the cytoplasm. Its function is as follows. Molecular chaperone. Has ATPase activity. The polypeptide is Chaperone protein HtpG (Acidovorax sp. (strain JS42)).